The chain runs to 89 residues: Small ribosomal subunit protein uS15 (89 aa).

Belongs to the universal ribosomal protein uS15 family. In terms of assembly, part of the 30S ribosomal subunit. Forms a bridge to the 50S subunit in the 70S ribosome, contacting the 23S rRNA.

One of the primary rRNA binding proteins, it binds directly to 16S rRNA where it helps nucleate assembly of the platform of the 30S subunit by binding and bridging several RNA helices of the 16S rRNA. Its function is as follows. Forms an intersubunit bridge (bridge B4) with the 23S rRNA of the 50S subunit in the ribosome. The protein is Small ribosomal subunit protein uS15 of Nitrosospira multiformis (strain ATCC 25196 / NCIMB 11849 / C 71).